The chain runs to 142 residues: Large ribosomal subunit protein uL13 (142 aa).

It belongs to the universal ribosomal protein uL13 family. Part of the 50S ribosomal subunit.

Functionally, this protein is one of the early assembly proteins of the 50S ribosomal subunit, although it is not seen to bind rRNA by itself. It is important during the early stages of 50S assembly. The sequence is that of Large ribosomal subunit protein uL13 from Caldicellulosiruptor bescii (strain ATCC BAA-1888 / DSM 6725 / KCTC 15123 / Z-1320) (Anaerocellum thermophilum).